The sequence spans 995 residues: MDFEKRKAATLASIRSSVTDKSPKGFLDEPIIPLLETINHHPSYFTTSSCSGRISILSQPKPKSNDSTKKKARGGSWLYITHDPADSDLVISLLFPSKSNQIDPIDQPSELVFRFEPLIIAVECKDLGSAQFLVALAISAGFRESGITSCGDGKRVIIAIRCSIRMEVPIGDTEKLMVSPEYVKFLVDIANEKMDANRKRTDGFSVALASNGFKNPDENDVDEDDNYENLAANHDSSINNGNLYPGVQKELIPLEKLSIVGEPVEKLHLWGHSACTIDESDRKEVIVFGGFGGFGRHARRNESLLLNPSCGTLKLIAVNESPSARLGHTASMVGDFMFVIGGRADPLNILNDVWRLDISTGEWSSQRCVGSEFPPRHRHAAASVGTKVYIFGGLYNDKIVSSMHILDTKDLQWKEVEQQGQWPCARHSHAMVAYGSQSFMFGGYNGENVLNDLYSFDVQSCSWKLEVISGKWPHARFSHSMFVYKHTIGIIGGCPVSQNCQELTLLDLKHRLWRSVRLEFMNKELFVRSTASILGDDLIVIGGGAACYAFGTKFSEPVKINLVQSVTMSENHLPPQPEDVSLESNKNNADLKTETSLSQPWVIQLERKYAKFGKDILKSFGWLDLERKVYSNEKGLCICFPVTENFSELFHEKQLLGKDFERSEENNLTKGLSLKDISCSAALNLLKEHGAKKLINVAFEAKKVAKSPLQRMREDITSILKQKGLPEELLDELPQKWERLGDIVVVPATSFKDPTWSSINDEVWCAVSKSLSANRLARQGRVEPNGTRDSTLEILVGDNGWVNHRENGILYSFDATKCMFSWGNLSEKLRMGNMACENEVVVDLFAGIGYFVLPFLVRAKAKLVYACEWNPHAIEALRRNVEANSVSERCIILEGDNRITAPKGVADRVNLGLIPSSEGSWVTAIQALRPEGGILHVHGNVKDSDESSWGEHVTKTLSDIARAEGRSWEVTVEHIEKVKWYAPRIRHLVADVRCR.

The interval 1–212 (MDFEKRKAAT…GFSVALASNG (212 aa)) is tRNA wybutosine-synthesizing protein 3 homolog. Kelch repeat units follow at residues 284-335 (EVIV…MVGD), 336-386 (FMFV…SVGT), 387-436 (KVYI…AYGS), 437-486 (QSFM…VYKH), and 488-535 (IGII…SILG). The tract at residues 661–995 (ERSEENNLTK…RHLVADVRCR (335 aa)) is tRNA wybutosine-synthesizing protein 2 homolog. Residues Lys-828 and 896 to 897 (DN) contribute to the S-adenosyl-L-methionine site.

It in the C-terminal section; belongs to the class I-like SAM-binding methyltransferase superfamily. TRM5/TYW2 family. The protein in the N-terminal section; belongs to the TYW3 family.

The enzyme catalyses 4-demethyl-7-[(3S)-3-amino-3-carboxypropyl]wyosine(37) in tRNA(Phe) + S-adenosyl-L-methionine = 7-[(3S)-3-amino-3-carboxypropyl]wyosine(37) in tRNA(Phe) + S-adenosyl-L-homocysteine + H(+). It catalyses the reaction 4-demethylwyosine(37) in tRNA(Phe) + S-adenosyl-L-methionine = 4-demethyl-7-[(3S)-3-amino-3-carboxypropyl]wyosine(37) in tRNA(Phe) + S-methyl-5'-thioadenosine + H(+). It participates in tRNA modification; wybutosine-tRNA(Phe) biosynthesis. Functionally, S-adenosyl-L-methionine-dependent transferase that acts as a component of the wybutosine biosynthesis pathway. Wybutosine is a hyper modified guanosine with a tricyclic base found at the 3'-position adjacent to the anticodon of eukaryotic phenylalanine tRNA. The protein is tRNA wybutosine-synthesizing protein 2/3/4 of Arabidopsis thaliana (Mouse-ear cress).